The sequence spans 230 residues: 5'-methylthioadenosine/S-adenosylhomocysteine nucleosidase (230 aa).

Glu-12 acts as the Proton acceptor in catalysis. Residues Gly-78, Met-153, and 174-175 (ME) each bind substrate. Residue Asp-198 is the Proton donor of the active site.

The protein belongs to the PNP/UDP phosphorylase family. MtnN subfamily.

The catalysed reaction is S-adenosyl-L-homocysteine + H2O = S-(5-deoxy-D-ribos-5-yl)-L-homocysteine + adenine. It carries out the reaction S-methyl-5'-thioadenosine + H2O = 5-(methylsulfanyl)-D-ribose + adenine. The enzyme catalyses 5'-deoxyadenosine + H2O = 5-deoxy-D-ribose + adenine. Its pathway is amino-acid biosynthesis; L-methionine biosynthesis via salvage pathway; S-methyl-5-thio-alpha-D-ribose 1-phosphate from S-methyl-5'-thioadenosine (hydrolase route): step 1/2. Functionally, catalyzes the irreversible cleavage of the glycosidic bond in both 5'-methylthioadenosine (MTA) and S-adenosylhomocysteine (SAH/AdoHcy) to adenine and the corresponding thioribose, 5'-methylthioribose and S-ribosylhomocysteine, respectively. Also cleaves 5'-deoxyadenosine, a toxic by-product of radical S-adenosylmethionine (SAM) enzymes, into 5-deoxyribose and adenine. The sequence is that of 5'-methylthioadenosine/S-adenosylhomocysteine nucleosidase from Aeromonas salmonicida (strain A449).